The sequence spans 310 residues: Tetrahydromethanopterin S-methyltransferase subunit H (310 aa).

Belongs to the MtrH family. As to quaternary structure, the complex is composed of 8 subunits; MtrA, MtrB, MtrC, MtrD, MtrE, MtrF, MtrG and MtrH.

It carries out the reaction 5-methyl-5,6,7,8-tetrahydromethanopterin + coenzyme M + 2 Na(+)(in) = 5,6,7,8-tetrahydromethanopterin + methyl-coenzyme M + 2 Na(+)(out). It functions in the pathway one-carbon metabolism; methanogenesis from CO(2); methyl-coenzyme M from 5,10-methylene-5,6,7,8-tetrahydromethanopterin: step 2/2. Part of a complex that catalyzes the formation of methyl-coenzyme M and tetrahydromethanopterin from coenzyme M and methyl-tetrahydromethanopterin. This is an energy-conserving, sodium-ion translocating step. MtrH catalyzes the transfer of the methyl group from methyl-tetrahydromethanopterin to the corrinoid prosthetic group of MtrA. This is Tetrahydromethanopterin S-methyltransferase subunit H from Methanothermobacter thermautotrophicus (strain ATCC 29096 / DSM 1053 / JCM 10044 / NBRC 100330 / Delta H) (Methanobacterium thermoautotrophicum).